The following is a 345-amino-acid chain: Uroporphyrinogen decarboxylase (345 aa).

Substrate is bound by residues 27 to 31 (RQAGR), Phe46, Asp76, Tyr152, Ser207, and His320.

Belongs to the uroporphyrinogen decarboxylase family. In terms of assembly, homodimer.

The protein localises to the cytoplasm. The catalysed reaction is uroporphyrinogen III + 4 H(+) = coproporphyrinogen III + 4 CO2. Its pathway is porphyrin-containing compound metabolism; protoporphyrin-IX biosynthesis; coproporphyrinogen-III from 5-aminolevulinate: step 4/4. Functionally, catalyzes the decarboxylation of four acetate groups of uroporphyrinogen-III to yield coproporphyrinogen-III. This chain is Uroporphyrinogen decarboxylase, found in Geobacillus kaustophilus (strain HTA426).